Here is an 82-residue protein sequence, read N- to C-terminus: DNA-directed RNA polymerase subunit Rpo5 (82 aa).

Belongs to the archaeal Rpo5/eukaryotic RPB5 RNA polymerase subunit family. As to quaternary structure, part of the RNA polymerase complex.

The protein resides in the cytoplasm. It catalyses the reaction RNA(n) + a ribonucleoside 5'-triphosphate = RNA(n+1) + diphosphate. In terms of biological role, DNA-dependent RNA polymerase (RNAP) catalyzes the transcription of DNA into RNA using the four ribonucleoside triphosphates as substrates. In Thermococcus onnurineus (strain NA1), this protein is DNA-directed RNA polymerase subunit Rpo5.